A 125-amino-acid polypeptide reads, in one-letter code: Large-conductance mechanosensitive channel (125 aa).

Helical transmembrane passes span 15–35 and 67–87; these read MDLAVGVIIGAAFTAIVNSLV and GSFLNAVINFLIIALVVFFLI.

Belongs to the MscL family. Homopentamer.

Its subcellular location is the cell membrane. Channel that opens in response to stretch forces in the membrane lipid bilayer. May participate in the regulation of osmotic pressure changes within the cell. This Lactobacillus gasseri (strain ATCC 33323 / DSM 20243 / BCRC 14619 / CIP 102991 / JCM 1131 / KCTC 3163 / NCIMB 11718 / NCTC 13722 / AM63) protein is Large-conductance mechanosensitive channel.